The primary structure comprises 161 residues: Allophycocyanin subunit alpha-B (161 aa).

Residue Asn-71 is modified to N4-methylasparagine. Cys-81 is a binding site for (2R,3E)-phycocyanobilin.

Belongs to the phycobiliprotein family. In terms of assembly, heterohexamer of two alpha chains, one alpha-B chain and three beta chains. In terms of processing, contains one covalently linked phycocyanobilin chromophore. The chromophore is added by phycocyanobilin lyase CpcS 1.

It localises to the cellular thylakoid membrane. Light-harvesting photosynthetic bile pigment-protein from the phycobiliprotein complex. Allophycocyanin has a maximum absorption at approximately 654 nanometers. This Nostoc sp. (strain PCC 7120 / SAG 25.82 / UTEX 2576) protein is Allophycocyanin subunit alpha-B (apcD).